We begin with the raw amino-acid sequence, 635 residues long: Chaperone protein HtpG (635 aa).

The interval 1 to 346 is a; substrate-binding; sequence MSQTTTTSAS…SADLPLNVSR (346 aa). A b region spans residues 347 to 563; sequence EILQESRDVR…QNELSPHLLR (217 aa). Residues 564–635 form a c region; that stretch reads MLKAAGQEAP…KRLNGLLLKA (72 aa).

Belongs to the heat shock protein 90 family. Homodimer.

The protein resides in the cytoplasm. In terms of biological role, molecular chaperone. Has ATPase activity. This is Chaperone protein HtpG from Bordetella pertussis (strain Tohama I / ATCC BAA-589 / NCTC 13251).